A 457-amino-acid polypeptide reads, in one-letter code: Protein translocase subunit SecY (457 aa).

A run of 10 helical transmembrane segments spans residues 17 to 37 (IFFTFSLLALCRIGVFIPVPG), 75 to 95 (IALGVVPYISASIIVQLLVVF), 120 to 140 (LFTLLLACVQSLLFAKFALRM), 163 to 183 (VFYLTTVVVMTTGTLLLMWIG), 195 to 215 (ISLIITLGMLASFPSVLGSIF), 230 to 250 (IVSLLVLCAVFVFVLMATVLI), 287 to 307 (VIPVIFASSLLMFPATIGQFL), 326 to 346 (VVYSIFYVLLIIFFTYFWTAT), 386 to 406 (LLGAVFLAVVAILPSILGRIL), and 412 to 432 (VSYFLGGTAMLIVVGVVLDTM).

This sequence belongs to the SecY/SEC61-alpha family. As to quaternary structure, component of the Sec protein translocase complex. Heterotrimer consisting of SecY, SecE and SecG subunits. The heterotrimers can form oligomers, although 1 heterotrimer is thought to be able to translocate proteins. Interacts with the ribosome. Interacts with SecDF, and other proteins may be involved. Interacts with SecA.

The protein localises to the cell inner membrane. Functionally, the central subunit of the protein translocation channel SecYEG. Consists of two halves formed by TMs 1-5 and 6-10. These two domains form a lateral gate at the front which open onto the bilayer between TMs 2 and 7, and are clamped together by SecE at the back. The channel is closed by both a pore ring composed of hydrophobic SecY resides and a short helix (helix 2A) on the extracellular side of the membrane which forms a plug. The plug probably moves laterally to allow the channel to open. The ring and the pore may move independently. The polypeptide is Protein translocase subunit SecY (Chlamydia muridarum (strain MoPn / Nigg)).